Consider the following 619-residue polypeptide: Eukaryotic translation initiation factor 3 subunit D (619 aa).

Residues 99–160 form a disordered region; that stretch reads QKQPHQRGRF…KWGARPPPKI (62 aa). Positions 100–121 are enriched in basic residues; that stretch reads KQPHQRGRFRGNLRNQRGRGRG. The segment at 288-302 is RNA gate; sequence EFDLLTVNETAIEPP. The segment at 588–619 is disordered; it reads TPAATETVATATTEATTPTTATKTTAPAAAQK.

It belongs to the eIF-3 subunit D family. Component of the eukaryotic translation initiation factor 3 (eIF-3) complex.

It localises to the cytoplasm. Functionally, mRNA cap-binding component of the eukaryotic translation initiation factor 3 (eIF-3) complex, which is involved in protein synthesis of a specialized repertoire of mRNAs and, together with other initiation factors, stimulates binding of mRNA and methionyl-tRNAi to the 40S ribosome. The eIF-3 complex specifically targets and initiates translation of a subset of mRNAs involved in cell proliferation. In the eIF-3 complex, eif3d specifically recognizes and binds the 7-methylguanosine cap of a subset of mRNAs. This chain is Eukaryotic translation initiation factor 3 subunit D, found in Aedes aegypti (Yellowfever mosquito).